The primary structure comprises 859 residues: Leucine--tRNA ligase (859 aa).

The short motif at 42-52 (PYPSGRLHMGH) is the 'HIGH' region element. The 'KMSKS' region motif lies at 618 to 622 (KMSKS). Lys-621 is a binding site for ATP.

It belongs to the class-I aminoacyl-tRNA synthetase family.

The protein resides in the cytoplasm. The catalysed reaction is tRNA(Leu) + L-leucine + ATP = L-leucyl-tRNA(Leu) + AMP + diphosphate. In Shewanella baltica (strain OS223), this protein is Leucine--tRNA ligase.